The following is a 396-amino-acid chain: Elongation factor Tu 2 (396 aa).

Residues 10 to 206 (KPHCNIGTIG…TVDAYIPQPD (197 aa)) form the tr-type G domain. The G1 stretch occupies residues 19-26 (GHVDHGKT). 19-26 (GHVDHGKT) serves as a coordination point for GTP. Thr26 is a binding site for Mg(2+). The segment at 60-64 (GITIN) is G2. Positions 81–84 (DCPG) are G3. GTP is bound by residues 81–85 (DCPGH) and 136–139 (NKVD). A G4 region spans residues 136–139 (NKVD). The interval 174–176 (SAK) is G5.

The protein belongs to the TRAFAC class translation factor GTPase superfamily. Classic translation factor GTPase family. EF-Tu/EF-1A subfamily. Monomer.

It localises to the cytoplasm. It catalyses the reaction GTP + H2O = GDP + phosphate + H(+). GTP hydrolase that promotes the GTP-dependent binding of aminoacyl-tRNA to the A-site of ribosomes during protein biosynthesis. The sequence is that of Elongation factor Tu 2 from Caulobacter sp. (strain K31).